Reading from the N-terminus, the 130-residue chain is Universal stress protein MSMEG_4207 (130 aa).

K104 bears the N6-acetyllysine mark.

Belongs to the universal stress protein A family. Post-translationally, acetylated on Lys-104 by PatA in the presence of acetyl-CoA as an acetyl donor.

The chain is Universal stress protein MSMEG_4207 from Mycolicibacterium smegmatis (strain ATCC 700084 / mc(2)155) (Mycobacterium smegmatis).